A 655-amino-acid chain; its full sequence is Import motor subunit, mitochondrial (655 aa).

The transit peptide at 1-23 directs the protein to the mitochondrion; the sequence is MLAAKNILNRSSLSSSFRIATRL. Threonine 330 is modified (phosphothreonine). Positions 629–655 are disordered; that stretch reads EQLYKNDSNNNNNNNNGNNAESDETKQ. Positions 637–647 are enriched in low complexity; the sequence is NNNNNNNNGNN.

This sequence belongs to the heat shock protein 70 family. In terms of assembly, component of the PAM complex, at least composed of SSC1 (mtHsp70), MGE1, TIM44, PAM16/TIM16, PAM17 and PAM18/TIM14. In the complex, SSC1 interacts directly with PAM18 and TIM44. Interacts with NAP1. Component of endonuclease SceI (endo.SceI), which is a heterodimer of ENS2 and SSC1.

It is found in the mitochondrion matrix. The catalysed reaction is ATP + H2O = ADP + phosphate + H(+). Functionally, essential component of the PAM complex, a complex required for the translocation of transit peptide-containing proteins from the inner membrane into the mitochondrial matrix in an ATP-dependent manner. Constitutes the ATP-driven core of the motor and binds the precursor preprotein. Required for the import of the processed frataxin homolog YFH1 into the mitochondrion. In terms of biological role, acts as a non-catalytic component of endonuclease SceI (endo.SceI), which cleaves specifically at multiple sites on mitochondrial DNA and produces double-stranded breaks. SSC1 confers broader sequence specificity, greater stability, and higher activity on the catalytic subunit. The protein is Import motor subunit, mitochondrial of Saccharomyces cerevisiae (Baker's yeast).